A 648-amino-acid chain; its full sequence is Nucleoside triphosphatase I (648 aa).

In terms of domain architecture, Helicase ATP-binding spans 48 to 212 (FIGLKNLNSM…NNLIGLLRPN (165 aa)). 61–68 (WDTGMGKT) lines the ATP pocket. Positions 150–153 (DEVH) match the DEXH box motif. The Helicase C-terminal domain occupies 378–541 (YIETCKIILN…KINVIFDLLK (164 aa)). The interval 467–533 (DIIILDMPWN…DIIKDKQGKI (67 aa)) is binding to the cap-specific mRNA (nucleoside-2'-O-)-methyltransferase.

This sequence belongs to the helicase family. NPH I subfamily. In terms of assembly, monomer. Interacts (via C-terminus) with RAP94 (via N-terminus). Interacts with the cap-specific mRNA (nucleoside-2'-O-)-methyltransferase.

The protein localises to the virion. The catalysed reaction is a ribonucleoside 5'-triphosphate + H2O = a ribonucleoside 5'-diphosphate + phosphate + H(+). DNA-dependent ATPase required for providing the needed energy to achieve the termination of early transcripts. Acts in concert with the RAP94 subunit of the virion RNA polymerase and the capping enzyme/VTF to catalyze release of UUUUUNU-containing nascent RNA from the elongation complex. NPH-I must bind ssDNA in order to exhibit ATPase activity. This is Nucleoside triphosphatase I (NPH1) from Amsacta (AmEPV).